The sequence spans 582 residues: Arginine--tRNA ligase (582 aa).

The 'HIGH' region signature appears at 127–137 (PNLAKEMHVGH).

It belongs to the class-I aminoacyl-tRNA synthetase family. Monomer.

Its subcellular location is the cytoplasm. It carries out the reaction tRNA(Arg) + L-arginine + ATP = L-arginyl-tRNA(Arg) + AMP + diphosphate. The chain is Arginine--tRNA ligase from Psychromonas ingrahamii (strain DSM 17664 / CCUG 51855 / 37).